We begin with the raw amino-acid sequence, 411 residues long: Efflux pump periplasmic linker BepF (411 aa).

Positions 118-196 (FVLQKDALQA…SLEQAQINLG (79 aa)) form a coiled coil.

It belongs to the membrane fusion protein (MFP) (TC 8.A.1) family. In terms of assembly, probably part of a tripartite efflux pump, which is composed of an outer membrane efflux protein, an inner membrane protein and a protein that expands the periplasmic space. Could form a tripartite pump with BepC and BepG.

It is found in the periplasm. Its function is as follows. May contribute to resistance to some drugs, such as deoxycholate, sodium dodecyl sulfate and nalidixic acid, in the absence of BepD and BepE. The polypeptide is Efflux pump periplasmic linker BepF (bepF) (Brucella suis biovar 1 (strain 1330)).